The following is a 158-amino-acid chain: Cystin-1 (158 aa).

A disordered region spans residues 1-146 (MGSGSSRSSR…AAISYDHSEE (146 aa)). Gly-2 carries N-myristoyl glycine lipidation. Low complexity-rich tracts occupy residues 19–32 (ESLPAGPGAAALEG) and 39–52 (PVAAAEVPGAAAEE). A Ciliary targeting motif motif is present at residues 29–33 (ALEGG). Basic and acidic residues predominate over residues 65–75 (DGRDETLRLLD).

As to quaternary structure, interacts (when myristoylated) with UNC119 and UNC119B; interaction is required for localization to cilium. As to expression, expressed at high levels in the kidney and pancreas. Moderate expression seen in the skeletal muscle, liver and heart. A weak expression seen in the brain, lung, uterus, prostate, testis, small intestine and colon.

The protein resides in the cell projection. It localises to the cilium membrane. The protein localises to the cytoplasm. Its subcellular location is the cytoskeleton. It is found in the cilium axoneme. The protein is Cystin-1 (CYS1) of Homo sapiens (Human).